Consider the following 109-residue polypeptide: Putative double-stranded DNA mimic protein YciU (109 aa).

This sequence belongs to the putative dsDNA mimic protein family.

Functionally, may act as a double-stranded DNA (dsDNA) mimic. Probably regulates the activity of a dsDNA-binding protein. The chain is Putative double-stranded DNA mimic protein YciU from Shigella flexneri.